A 133-amino-acid chain; its full sequence is Putative pre-16S rRNA nuclease (133 aa).

It belongs to the YqgF nuclease family.

The protein localises to the cytoplasm. In terms of biological role, could be a nuclease involved in processing of the 5'-end of pre-16S rRNA. The sequence is that of Putative pre-16S rRNA nuclease from Bordetella bronchiseptica (strain ATCC BAA-588 / NCTC 13252 / RB50) (Alcaligenes bronchisepticus).